The sequence spans 36 residues: WNPFKELERAGQRVRDAIISAGPAVATVAQATALAK.

Lys-36 carries the post-translational modification Lysine amide.

The protein belongs to the cecropin family.

The protein resides in the secreted. Cecropins have lytic and antibacterial activity against several Gram-positive and Gram-negative bacteria. In Antheraea pernyi (Chinese oak silk moth), this protein is Cecropin-D.